A 570-amino-acid polypeptide reads, in one-letter code: Sulfite reductase [NADPH] hemoprotein beta-component (570 aa).

[4Fe-4S] cluster contacts are provided by C434, C440, C479, and C483. A siroheme-binding site is contributed by C483.

This sequence belongs to the nitrite and sulfite reductase 4Fe-4S domain family. Alpha(8)-beta(8). The alpha component is a flavoprotein, the beta component is a hemoprotein. Siroheme is required as a cofactor. It depends on [4Fe-4S] cluster as a cofactor.

It catalyses the reaction hydrogen sulfide + 3 NADP(+) + 3 H2O = sulfite + 3 NADPH + 4 H(+). It participates in sulfur metabolism; hydrogen sulfide biosynthesis; hydrogen sulfide from sulfite (NADPH route): step 1/1. Its function is as follows. Component of the sulfite reductase complex that catalyzes the 6-electron reduction of sulfite to sulfide. This is one of several activities required for the biosynthesis of L-cysteine from sulfate. The sequence is that of Sulfite reductase [NADPH] hemoprotein beta-component from Shigella dysenteriae serotype 1 (strain Sd197).